The following is a 313-amino-acid chain: tRNA dimethylallyltransferase (313 aa).

ATP is bound at residue 17–24 (GPTASGKT). 19–24 (TASGKT) lines the substrate pocket. Interaction with substrate tRNA regions lie at residues 42 to 45 (DSAL), 166 to 170 (QRLSR), 247 to 252 (RCVGYR), and 280 to 287 (KRQITWLR).

It belongs to the IPP transferase family. Monomer. Requires Mg(2+) as cofactor.

The catalysed reaction is adenosine(37) in tRNA + dimethylallyl diphosphate = N(6)-dimethylallyladenosine(37) in tRNA + diphosphate. Catalyzes the transfer of a dimethylallyl group onto the adenine at position 37 in tRNAs that read codons beginning with uridine, leading to the formation of N6-(dimethylallyl)adenosine (i(6)A). This is tRNA dimethylallyltransferase from Proteus mirabilis (strain HI4320).